A 449-amino-acid polypeptide reads, in one-letter code: MVSPETSSSHYQSSPMAKYAGTRTRPVVCISDVVLFLGGAFMSLILVWSFFSFSSISPNLTVKNEESSNKCSSGIDMSQDPTDPVYYDDPDLTYTIEKPVKNWDEKRRRWLNLHPSFIPGAENRTVMVTGSQSAPCKNPIGDHLLLRFFKNKVDYCRIHGHDIFYSNALLHPKMNSYWAKLPAVKAAMIAHPEAEWIWWVDSDALFTDMDFTPPWRRYKEHNLVVHGWPGVIYNDRSWTALNAGVFLIRNCQWSMELIDTWTGMGPVSPEYAKWGQIQRSIFKDKLFPESDDQTALLYLLYKHREVYYPKIYLEGDFYFEGYWLEIVPGLSNVTERYLEMEREDATLRRRHAEKVSERYAAFREERFLKGERGGKGSKRRPFVTHFTGCQPCSGDHNKMYDGDTCWNGMIKAINFADNQVMRKYGFVHSDLGKTSPLQPVPFDYPDEPW.

The Cytoplasmic segment spans residues 1 to 32 (MVSPETSSSHYQSSPMAKYAGTRTRPVVCISD). Residues 33-53 (VVLFLGGAFMSLILVWSFFSF) traverse the membrane as a helical; Signal-anchor for type II membrane protein segment. The Lumenal segment spans residues 54–449 (SSISPNLTVK…VPFDYPDEPW (396 aa)). Residues asparagine 59, asparagine 123, and asparagine 332 are each glycosylated (N-linked (GlcNAc...) asparagine).

This sequence belongs to the glycosyltransferase 34 family.

It is found in the golgi apparatus membrane. Functionally, probable glycosyltransferase that may be involved in the biosynthesis of xyloglucan. This Arabidopsis thaliana (Mouse-ear cress) protein is Putative glycosyltransferase 7 (GT7).